A 332-amino-acid polypeptide reads, in one-letter code: tRNA(Ile)-lysidine synthase (332 aa).

Position 39–44 (Ser-39–Ser-44) interacts with ATP.

It belongs to the tRNA(Ile)-lysidine synthase family.

The protein localises to the cytoplasm. It carries out the reaction cytidine(34) in tRNA(Ile2) + L-lysine + ATP = lysidine(34) in tRNA(Ile2) + AMP + diphosphate + H(+). Ligates lysine onto the cytidine present at position 34 of the AUA codon-specific tRNA(Ile) that contains the anticodon CAU, in an ATP-dependent manner. Cytidine is converted to lysidine, thus changing the amino acid specificity of the tRNA from methionine to isoleucine. This chain is tRNA(Ile)-lysidine synthase, found in Leifsonia xyli subsp. xyli (strain CTCB07).